The sequence spans 162 residues: Anthrone oxygenase nsrD (162 aa).

3 helical membrane-spanning segments follow: residues 17 to 37 (FLSGSMMSLSALVIPLFLDTI), 54 to 74 (GSIYMPALCVATCGIYGYVAL), and 86 to 106 (PYVLAAVSTLAMVPFTWWVMV). Asn-109 carries an N-linked (GlcNAc...) asparagine glycan. A helical transmembrane segment spans residues 130–150 (LVVKWAWLHVVRSLYPLFGAF).

The protein belongs to the anthrone oxygenase family.

The protein localises to the membrane. The enzyme catalyses emodin anthrone + O2 = emodin + H2O + H(+). Its pathway is secondary metabolite biosynthesis. Anthrone oxygenase; part of the gene cluster that mediates the biosynthesis of the tetrahydroxanthone dimer neosartorin, which exhibits antibacterial activity. The two different monomeric units appear to be synthesized by the same set of enzymes, among which the Baeyer-Villiger monooxygenase nsrF is the key enzyme for the divergence of the biosynthetic routes. The pathway begins with the synthesis of atrochrysone thioester by the polyketide synthase nsrB. The atrochrysone carboxyl ACP thioesterase nsrC then breaks the thioester bond and releases the atrochrysone carboxylic acid from AacuL. Atrochrysone carboxylic acid is decarboxylated by the decarboxylase nsrE, and oxidized by the anthrone oxygenase nsrD to yield emodin. Emodin is then reduced to emodin hydroquinone by the oxidoreductase nsrR. A-ring reduction by the short chain dehydrogenase nsrJ, dehydration by the scytalone dehydratase-like protein nsrI and probable spontaneous re-oxidation, results in overall deoxygenation to chrysophanol. The Baeyer-Villiger monooxygenase nsrF accepts chrysophanol as a substrate to insert one oxygen atom at two different positions to yield the precursors of both monomric units. NsrF is promiscuous/flexible in interacting with the 2 (non methylated and methylated) aromatic rings of chrysophanol, thus diverging the biosynthetic pathway at this point. After the hydrolysis of the lactones, methylesterification by the methyltransferase nsrG yields respectively moniliphenone and 2,2',6'-trihydroxy-4-methyl-6-methoxya-cyldiphenylmethanone. The next steps are the hydroxylation by the FAD-dependent monooxygenase nsrK, followed by isomerization by the monooxygenase nsrQ. The short chain dehydrogenase/reductase nsrO then catalyzes the C-5 ketoreduction to give the xanthone skeleton of blennolide C and 5-acetylblennolide A. The acetyltransferase nsrL has a strict substrate specificity and uses only blennolide A but not blennolide C to yield 5-acetylblennolide A as the single-acetylated product. In the final step of the biosynthesis, the heterodimerization of the 2 xanthones, blennolide C and 5-acetylblennolide A, is catalyzed by the cytochrome P450 monooxygenase nsrP. NsrP can utilize at least three different xanthones as its substrates to perform the dimerization reaction. The polypeptide is Anthrone oxygenase nsrD (Aspergillus novofumigatus (strain IBT 16806)).